A 167-amino-acid polypeptide reads, in one-letter code: Probable chemoreceptor glutamine deamidase CheD (167 aa).

Belongs to the CheD family.

It catalyses the reaction L-glutaminyl-[protein] + H2O = L-glutamyl-[protein] + NH4(+). Its function is as follows. Probably deamidates glutamine residues to glutamate on methyl-accepting chemotaxis receptors (MCPs), playing an important role in chemotaxis. In Natronomonas pharaonis (strain ATCC 35678 / DSM 2160 / CIP 103997 / JCM 8858 / NBRC 14720 / NCIMB 2260 / Gabara) (Halobacterium pharaonis), this protein is Probable chemoreceptor glutamine deamidase CheD.